Reading from the N-terminus, the 210-residue chain is 7-carboxy-7-deazaguanine synthase (210 aa).

Substrate-binding positions include 25-27 (IQG) and Arg-40. A Radical SAM core domain is found at 31–210 (HTGTAAYFIR…LQTHKYLNIP (180 aa)). Residues Cys-44, Cys-48, and Cys-51 each coordinate [4Fe-4S] cluster. Residue Thr-84 participates in substrate binding. S-adenosyl-L-methionine contacts are provided by residues Gly-86 and 127 to 129 (SPK). Pro-210 is a binding site for substrate.

It belongs to the radical SAM superfamily. 7-carboxy-7-deazaguanine synthase family. Homodimer. [4Fe-4S] cluster is required as a cofactor. S-adenosyl-L-methionine serves as cofactor. Requires Mg(2+) as cofactor.

The catalysed reaction is 6-carboxy-5,6,7,8-tetrahydropterin + H(+) = 7-carboxy-7-deazaguanine + NH4(+). The protein operates within purine metabolism; 7-cyano-7-deazaguanine biosynthesis. In terms of biological role, catalyzes the complex heterocyclic radical-mediated conversion of 6-carboxy-5,6,7,8-tetrahydropterin (CPH4) to 7-carboxy-7-deazaguanine (CDG), a step common to the biosynthetic pathways of all 7-deazapurine-containing compounds. The protein is 7-carboxy-7-deazaguanine synthase of Flavobacterium psychrophilum (strain ATCC 49511 / DSM 21280 / CIP 103535 / JIP02/86).